Here is a 208-residue protein sequence, read N- to C-terminus: Imidazole glycerol phosphate synthase subunit HisH (208 aa).

Residues 1–206 enclose the Glutamine amidotransferase type-1 domain; the sequence is MIVIVDYDTG…KEMTEDEALS (206 aa). Residue Cys-79 is the Nucleophile of the active site. Catalysis depends on residues His-181 and Glu-183.

Heterodimer of HisH and HisF.

The protein localises to the cytoplasm. It carries out the reaction 5-[(5-phospho-1-deoxy-D-ribulos-1-ylimino)methylamino]-1-(5-phospho-beta-D-ribosyl)imidazole-4-carboxamide + L-glutamine = D-erythro-1-(imidazol-4-yl)glycerol 3-phosphate + 5-amino-1-(5-phospho-beta-D-ribosyl)imidazole-4-carboxamide + L-glutamate + H(+). The enzyme catalyses L-glutamine + H2O = L-glutamate + NH4(+). The protein operates within amino-acid biosynthesis; L-histidine biosynthesis; L-histidine from 5-phospho-alpha-D-ribose 1-diphosphate: step 5/9. IGPS catalyzes the conversion of PRFAR and glutamine to IGP, AICAR and glutamate. The HisH subunit catalyzes the hydrolysis of glutamine to glutamate and ammonia as part of the synthesis of IGP and AICAR. The resulting ammonia molecule is channeled to the active site of HisF. The sequence is that of Imidazole glycerol phosphate synthase subunit HisH from Lacticaseibacillus casei (strain BL23) (Lactobacillus casei).